The following is a 505-amino-acid chain: Cytochrome P450 monooxygenase efuB (505 aa).

The chain crosses the membrane as a helical span at residues 12–34; it reads GFWPTVAGTVATYLFYQIVATVY. Cysteine 450 contacts heme.

The protein belongs to the cytochrome P450 family. Requires heme as cofactor.

The protein resides in the membrane. It functions in the pathway secondary metabolite biosynthesis; terpenoid biosynthesis. In terms of biological role, cytochrome P450 monooxygenase; part of the gene cluster that mediates the biosynthesis of enfumafungin, a glycosylated fernene-type triterpenoid with potent antifungal activity, mediated by its interaction with beta-1,3-glucan synthase and the fungal cell wall. The pathway begins with the terpene cyclase-glycosyl transferase fusion protein that most likely uses 2,3-oxidosqualene as substrate and catalyzes glycosylation immediately after cyclization. The fernene glycoside then could be processed by the desaturase efuI which catalyzes isomerization of a double bond established by efuA to form the core structure. The latter would then undergo a series of hydroxylations in unknown order at C-2, C-19, C-23 and C-25, which would be catalyzed by two of the three cytochrome P450 monooxygenases efuB, efuG or efuH. The hydroxy-group at C-25 becomes oxidized by the dehydrogenase efuE to enable a spontaneous, non-enzymatic hemiacetal formation with C-23. After hydroxylation at C-2, acetylation by the acetyltransferase efuC takes place. The final steps in enfumafungin biosynthesis require expansion of the 5-membered ring by lactonization via a Baeyer-Villiger reaction mediated by one of the BGC's cytochrome P450 monooxygenases (efuB, efuG or efuH) followed by ring cleavage. This type of reaction would establish a double bond between C-20 and C-21 which could be reduced by the reductase efuL to form the final product. The chain is Cytochrome P450 monooxygenase efuB from Hormonema carpetanum.